The primary structure comprises 262 residues: tRNA pseudouridine synthase A (262 aa).

Catalysis depends on aspartate 51, which acts as the Nucleophile. Tyrosine 109 lines the substrate pocket.

Belongs to the tRNA pseudouridine synthase TruA family. As to quaternary structure, homodimer.

It carries out the reaction uridine(38/39/40) in tRNA = pseudouridine(38/39/40) in tRNA. Its function is as follows. Formation of pseudouridine at positions 38, 39 and 40 in the anticodon stem and loop of transfer RNAs. This chain is tRNA pseudouridine synthase A, found in Dechloromonas aromatica (strain RCB).